The sequence spans 459 residues: Hypotaurine/taurine--pyruvate aminotransferase (459 aa).

Position 287 is an N6-(pyridoxal phosphate)lysine (K287).

This sequence belongs to the class-III pyridoxal-phosphate-dependent aminotransferase family. Pyridoxal 5'-phosphate is required as a cofactor.

It carries out the reaction hypotaurine + pyruvate = 2-sulfinoacetaldehyde + L-alanine. The catalysed reaction is taurine + pyruvate = sulfoacetaldehyde + L-alanine. It participates in organosulfur degradation. In terms of biological role, converts hypotaurine to alanine and sulfinoacetaldehyde, which desulfinates spontaneously to acetaldehyde and sulfite. Can also catalyze the degradation of taurine into alanine and sulfoacetaldehyde, which is stable. Has 2-fold higher aminotransferase activity with hypotaurine as the substrate. The sequence is that of Hypotaurine/taurine--pyruvate aminotransferase from Paracoccus denitrificans (strain Pd 1222).